Here is a 272-residue protein sequence, read N- to C-terminus: NH(3)-dependent NAD(+) synthetase (272 aa).

ATP is bound at residue 45–52 (GISGGQDS). D51 is a Mg(2+) binding site. R138 is a deamido-NAD(+) binding site. T158 lines the ATP pocket. Position 163 (E163) interacts with Mg(2+). The deamido-NAD(+) site is built by K171 and D178. ATP is bound by residues K187 and T209. 258 to 259 (HK) contacts deamido-NAD(+).

The protein belongs to the NAD synthetase family. Homodimer.

It catalyses the reaction deamido-NAD(+) + NH4(+) + ATP = AMP + diphosphate + NAD(+) + H(+). It participates in cofactor biosynthesis; NAD(+) biosynthesis; NAD(+) from deamido-NAD(+) (ammonia route): step 1/1. Its function is as follows. Catalyzes the ATP-dependent amidation of deamido-NAD to form NAD. Uses ammonia as a nitrogen source. The chain is NH(3)-dependent NAD(+) synthetase from Bacillus cereus (strain 03BB102).